The chain runs to 109 residues: Large ribosomal subunit protein uL1 (109 aa).

The protein belongs to the universal ribosomal protein uL1 family. Part of the 50S ribosomal subunit.

Binds directly to 23S rRNA. The L1 stalk is quite mobile in the ribosome, and is involved in E site tRNA release. Functionally, protein L1 is also a translational repressor protein, it controls the translation of the L11 operon by binding to its mRNA. In Aquifex pyrophilus, this protein is Large ribosomal subunit protein uL1 (rplA).